Consider the following 201-residue polypeptide: Probable quinol oxidase subunit 3 (201 aa).

The next 5 membrane-spanning stretches (helical) occupy residues 20 to 40 (LGFW…FATL), 62 to 82 (LVLI…IAIY), 91 to 111 (LMMF…GFEI), 133 to 153 (FFIL…WAIC), and 172 to 192 (FIVS…FTAV).

This sequence belongs to the cytochrome c oxidase subunit 3 family.

The protein localises to the cell membrane. The catalysed reaction is 2 a quinol + O2 = 2 a quinone + 2 H2O. In terms of biological role, catalyzes quinol oxidation with the concomitant reduction of oxygen to water. In Staphylococcus aureus (strain MSSA476), this protein is Probable quinol oxidase subunit 3 (qoxC).